The primary structure comprises 506 residues: UDP-N-acetylmuramoyl-L-alanyl-D-glutamate--2,6-diaminopimelate ligase (506 aa).

S42 contacts UDP-N-acetyl-alpha-D-muramoyl-L-alanyl-D-glutamate. 125–131 (GTSGKTT) is an ATP binding site. Residues 166–167 (TT), S193, and R201 contribute to the UDP-N-acetyl-alpha-D-muramoyl-L-alanyl-D-glutamate site. K233 bears the N6-carboxylysine mark. Meso-2,6-diaminopimelate is bound by residues R395, 419 to 422 (DNPR), G475, and E479. Residues 419–422 (DNPR) carry the Meso-diaminopimelate recognition motif motif.

This sequence belongs to the MurCDEF family. MurE subfamily. The cofactor is Mg(2+). Post-translationally, carboxylation is probably crucial for Mg(2+) binding and, consequently, for the gamma-phosphate positioning of ATP.

The protein localises to the cytoplasm. It catalyses the reaction UDP-N-acetyl-alpha-D-muramoyl-L-alanyl-D-glutamate + meso-2,6-diaminopimelate + ATP = UDP-N-acetyl-alpha-D-muramoyl-L-alanyl-gamma-D-glutamyl-meso-2,6-diaminopimelate + ADP + phosphate + H(+). It functions in the pathway cell wall biogenesis; peptidoglycan biosynthesis. Catalyzes the addition of meso-diaminopimelic acid to the nucleotide precursor UDP-N-acetylmuramoyl-L-alanyl-D-glutamate (UMAG) in the biosynthesis of bacterial cell-wall peptidoglycan. The polypeptide is UDP-N-acetylmuramoyl-L-alanyl-D-glutamate--2,6-diaminopimelate ligase (Streptomyces coelicolor (strain ATCC BAA-471 / A3(2) / M145)).